The primary structure comprises 373 residues: Innexin shaking-B (373 aa).

Residues 1–21 (MLDIFRGLKSLVKISHVNTDS) lie on the Cytoplasmic side of the membrane. Residues 22–42 (PVFRLHYSITVIILMSFSLIV) traverse the membrane as a helical segment. Residues 43–106 (TTRQYVGNPI…SAEATAADKK (64 aa)) lie on the Extracellular side of the membrane. Residues 107–127 (IYKYYQWVCFCLFFQAILFYT) traverse the membrane as a helical segment. Over 128–176 (PRWLWKSWEGGKIHALMMDLDIGICSEIEKKQKKKLLLDYLWDNLRYHN) the chain is Cytoplasmic. The chain crosses the membrane as a helical span at residues 177–199 (WWAYRYYVCEFLSLCNVIGQMFL). At 200–268 (MNRFFDGEFM…ILPLNVVNEK (69 aa)) the chain is on the extracellular side. Residues 269-289 (IYIFLWFWFIILTILTTLTIF) form a helical membrane-spanning segment. Topologically, residues 290–373 (YRIIIIFSPR…PGMKGEIQDA (84 aa)) are cytoplasmic.

This sequence belongs to the pannexin family. As to quaternary structure, monomer.

Its subcellular location is the cell membrane. The protein resides in the cell junction. It localises to the gap junction. Structural component of the gap junctions at electrical synapses in distal and mid-depth levels in the lamina. The polypeptide is Innexin shaking-B (Anopheles gambiae (African malaria mosquito)).